Consider the following 228-residue polypeptide: Cytidylate kinase (228 aa).

Position 17–25 (17–25 (GPTASGKGT)) interacts with ATP.

This sequence belongs to the cytidylate kinase family. Type 1 subfamily.

The protein resides in the cytoplasm. It carries out the reaction CMP + ATP = CDP + ADP. It catalyses the reaction dCMP + ATP = dCDP + ADP. The sequence is that of Cytidylate kinase from Burkholderia ambifaria (strain MC40-6).